The sequence spans 119 residues: Large ribosomal subunit protein uL18 (119 aa).

The protein belongs to the universal ribosomal protein uL18 family. In terms of assembly, part of the 50S ribosomal subunit; part of the 5S rRNA/L5/L18/L25 subcomplex. Contacts the 5S and 23S rRNAs.

This is one of the proteins that bind and probably mediate the attachment of the 5S RNA into the large ribosomal subunit, where it forms part of the central protuberance. This Xanthomonas oryzae pv. oryzae (strain PXO99A) protein is Large ribosomal subunit protein uL18.